Consider the following 549-residue polypeptide: Probable protein kinase UbiB (549 aa).

One can recognise a Protein kinase domain in the interval aspartate 123–leucine 501. ATP is bound by residues leucine 129 to valine 137 and lysine 152. The active-site Proton acceptor is the aspartate 287. Transmembrane regions (helical) follow at residues serine 498–glutamine 518 and alanine 520–tryptophan 540.

Belongs to the ABC1 family. UbiB subfamily.

The protein resides in the cell inner membrane. It functions in the pathway cofactor biosynthesis; ubiquinone biosynthesis [regulation]. Functionally, is probably a protein kinase regulator of UbiI activity which is involved in aerobic coenzyme Q (ubiquinone) biosynthesis. This chain is Probable protein kinase UbiB, found in Shewanella sp. (strain MR-4).